A 271-amino-acid polypeptide reads, in one-letter code: Sec-independent protein translocase protein TatC (271 aa).

The next 5 membrane-spanning stretches (helical) occupy residues 24–44 (ISVG…EQIF), 78–98 (FFAG…LFIA), 112–132 (FLFV…YFVF), 159–179 (LVIK…GLLL), and 215–235 (FTQV…IFFG). The interval 247–271 (AAEEAQWAADHNVDDDDVDHPEHKA) is disordered.

The protein belongs to the TatC family. The Tat system comprises two distinct complexes: a TatABC complex, containing multiple copies of TatA, TatB and TatC subunits, and a separate TatA complex, containing only TatA subunits. Substrates initially bind to the TatABC complex, which probably triggers association of the separate TatA complex to form the active translocon.

It localises to the cell inner membrane. Part of the twin-arginine translocation (Tat) system that transports large folded proteins containing a characteristic twin-arginine motif in their signal peptide across membranes. Together with TatB, TatC is part of a receptor directly interacting with Tat signal peptides. The protein is Sec-independent protein translocase protein TatC of Magnetococcus marinus (strain ATCC BAA-1437 / JCM 17883 / MC-1).